The sequence spans 538 residues: NADH-quinone oxidoreductase subunit N (538 aa).

14 consecutive transmembrane segments (helical) span residues 28–48 (LAPV…EAFV), 57–77 (QIIV…TTIA), 94–114 (PTLA…VLFA), 147–167 (HTEV…FAAA), 170–190 (LIMM…LCGM), 206–226 (FLLG…LYGC), 249–269 (IVAG…AVPF), 288–308 (MAVA…YVGL), 315–335 (WQIV…IVGL), 343–363 (LLAY…VGAW), 380–400 (VLVY…LILM), 424–444 (IGVL…TAGF), 458–478 (GYAW…AFYL), and 503–523 (IAGW…GVAP).

The protein belongs to the complex I subunit 2 family. In terms of assembly, NDH-1 is composed of 14 different subunits. Subunits NuoA, H, J, K, L, M, N constitute the membrane sector of the complex.

The protein localises to the cell membrane. The enzyme catalyses a quinone + NADH + 5 H(+)(in) = a quinol + NAD(+) + 4 H(+)(out). Functionally, NDH-1 shuttles electrons from NADH, via FMN and iron-sulfur (Fe-S) centers, to quinones in the respiratory chain. The immediate electron acceptor for the enzyme in this species is believed to be a menaquinone. Couples the redox reaction to proton translocation (for every two electrons transferred, four hydrogen ions are translocated across the cytoplasmic membrane), and thus conserves the redox energy in a proton gradient. In Cutibacterium acnes (strain DSM 16379 / KPA171202) (Propionibacterium acnes), this protein is NADH-quinone oxidoreductase subunit N.